Reading from the N-terminus, the 172-residue chain is Large ribosomal subunit protein uL10 (172 aa).

Belongs to the universal ribosomal protein uL10 family. Part of the ribosomal stalk of the 50S ribosomal subunit. The N-terminus interacts with L11 and the large rRNA to form the base of the stalk. The C-terminus forms an elongated spine to which L12 dimers bind in a sequential fashion forming a multimeric L10(L12)X complex.

In terms of biological role, forms part of the ribosomal stalk, playing a central role in the interaction of the ribosome with GTP-bound translation factors. This Methylorubrum extorquens (strain CM4 / NCIMB 13688) (Methylobacterium extorquens) protein is Large ribosomal subunit protein uL10.